Consider the following 101-residue polypeptide: Small ribosomal subunit protein uS14 (101 aa).

The disordered stretch occupies residues 52 to 72 (PRDSSPVRQRRRCRSTGRPRG). Positions 59-72 (RQRRRCRSTGRPRG) are enriched in basic residues.

This sequence belongs to the universal ribosomal protein uS14 family. Part of the 30S ribosomal subunit. Contacts proteins S3 and S10.

In terms of biological role, binds 16S rRNA, required for the assembly of 30S particles and may also be responsible for determining the conformation of the 16S rRNA at the A site. The chain is Small ribosomal subunit protein uS14 from Nitrosococcus oceani (strain ATCC 19707 / BCRC 17464 / JCM 30415 / NCIMB 11848 / C-107).